Consider the following 326-residue polypeptide: tRNA dimethylallyltransferase 2 (326 aa).

14-21 provides a ligand contact to ATP; sequence GPTASGKT. Position 16–21 (16–21) interacts with substrate; that stretch reads TASGKT. The interaction with substrate tRNA stretch occupies residues 39-42; the sequence is DSMQ.

It belongs to the IPP transferase family. As to quaternary structure, monomer. It depends on Mg(2+) as a cofactor.

It catalyses the reaction adenosine(37) in tRNA + dimethylallyl diphosphate = N(6)-dimethylallyladenosine(37) in tRNA + diphosphate. In terms of biological role, catalyzes the transfer of a dimethylallyl group onto the adenine at position 37 in tRNAs that read codons beginning with uridine, leading to the formation of N6-(dimethylallyl)adenosine (i(6)A). The protein is tRNA dimethylallyltransferase 2 of Geotalea daltonii (strain DSM 22248 / JCM 15807 / FRC-32) (Geobacter daltonii).